Here is a 372-residue protein sequence, read N- to C-terminus: Putative glutamate--cysteine ligase 2 (372 aa).

It belongs to the glutamate--cysteine ligase type 2 family. YbdK subfamily. As to quaternary structure, homodimer.

It carries out the reaction L-cysteine + L-glutamate + ATP = gamma-L-glutamyl-L-cysteine + ADP + phosphate + H(+). Functionally, ATP-dependent carboxylate-amine ligase which exhibits weak glutamate--cysteine ligase activity. The sequence is that of Putative glutamate--cysteine ligase 2 from Citrobacter koseri (strain ATCC BAA-895 / CDC 4225-83 / SGSC4696).